Consider the following 158-residue polypeptide: UPF0311 protein CA_C3321 (158 aa).

Belongs to the UPF0311 family.

This Clostridium acetobutylicum (strain ATCC 824 / DSM 792 / JCM 1419 / IAM 19013 / LMG 5710 / NBRC 13948 / NRRL B-527 / VKM B-1787 / 2291 / W) protein is UPF0311 protein CA_C3321.